A 453-amino-acid chain; its full sequence is GTPase Der (453 aa).

2 EngA-type G domains span residues 4–169 and 177–352; these read PIVA…PTQG and TKIA…NEYQ. Residues 10 to 17, 57 to 61, 120 to 123, 183 to 190, 230 to 234, and 295 to 298 each bind GTP; these read GRPNVGKS, DTGGL, NKCE, DTAGI, and NKWD. Positions 353–438 constitute a KH-like domain; that stretch reads RRVTTSVINE…PIRLLWRGKK (86 aa).

This sequence belongs to the TRAFAC class TrmE-Era-EngA-EngB-Septin-like GTPase superfamily. EngA (Der) GTPase family. Associates with the 50S ribosomal subunit.

In terms of biological role, GTPase that plays an essential role in the late steps of ribosome biogenesis. The chain is GTPase Der from Trichodesmium erythraeum (strain IMS101).